Here is a 453-residue protein sequence, read N- to C-terminus: Folate transporter 1 (453 aa).

A glycan (N-linked (GlcNAc...) asparagine) is linked at asparagine 36. Helical transmembrane passes span 48 to 68 (PYWT…TDIL), 73 to 93 (IVMI…FGKG), 102 to 122 (VSFG…YSIV), 136 to 156 (AAAL…ISTH), and 161 to 181 (LVLN…AIFL). Residue asparagine 260 is glycosylated (N-linked (GlcNAc...) asparagine). Helical transmembrane passes span 276–296 (VANG…SLFI), 306–326 (HGQM…YLCS), 331–351 (VLVA…LITA), 368–388 (IFGC…LVVV), and 401–421 (FVIY…FFMI).

The protein belongs to the reduced folate carrier (RFC) transporter (TC 2.A.48) family. In terms of tissue distribution, highly expressed in pharynx and posterior part of the intestine. Expressed at lower levels in the body wall muscles, head muscles, and vulva muscles. Highly expressed in the intestine of the early larva, levels decrease in the later stages of development.

Its subcellular location is the membrane. Functionally, folate transporter. In Caenorhabditis elegans, this protein is Folate transporter 1 (folt-1).